A 536-amino-acid chain; its full sequence is SNW domain-containing protein 1 (536 aa).

The tract at residues 1 to 46 is disordered; the sequence is MALTSFLPAPTQLSQDQLEAEEKARSQRSRQTSLVSSRREPPPYGY. Alanine 2 carries the post-translational modification N-acetylalanine. Serine 14 carries the phosphoserine modification. Lysine 23 is covalently cross-linked (Glycyl lysine isopeptide (Lys-Gly) (interchain with G-Cter in SUMO2)). Positions 59–79 are interaction with PPIL1; it reads GDGGAFPEIHVAQYPLDMGRK. Glycyl lysine isopeptide (Lys-Gly) (interchain with G-Cter in SUMO2) cross-links involve residues lysine 81, lysine 97, lysine 115, lysine 122, lysine 141, lysine 158, and lysine 170. The segment at 174–339 is SNW; that stretch reads AQYIRYTPSQ…KARERRAGIK (166 aa). Serine 182 and serine 190 each carry phosphoserine. A Glycyl lysine isopeptide (Lys-Gly) (interchain with G-Cter in SUMO2) cross-link involves residue lysine 193. Residues 209-233 form a disordered region; that stretch reads PPRFKINKKIPRGPPSPPAPVMHSP. Residues serine 224, serine 232, and serine 234 each carry the phosphoserine modification. Residues lysine 240, lysine 258, lysine 286, lysine 339, lysine 344, lysine 416, lysine 441, and lysine 452 each participate in a glycyl lysine isopeptide (Lys-Gly) (interchain with G-Cter in SUMO2) cross-link. Residues 311–386 form a disordered region; the sequence is KMAQKEKEKH…RSKLQRNENR (76 aa). Basic and acidic residues-rich tracts occupy residues 472-489 and 503-530; these read FVPD…RGRE and KFLE…EHEG. Positions 472–536 are disordered; the sequence is FVPDKEFSGS…EHEGKKRRKE (65 aa). A phosphoserine mark is found at serine 479 and serine 481. A Glycyl lysine isopeptide (Lys-Gly) (interchain with G-Cter in SUMO2) cross-link involves residue lysine 509.

This sequence belongs to the SNW family. Identified in the spliceosome C complex. Associates with U4/U6-U5 tri-small nuclear ribonucleoproteins (U4/U6-U5 tri-snRNPs). Component of the minor spliceosome, which splices U12-type introns. Interacts with SKI, SMAD2,SMAD3, RBPJ, RB1, PABPN1, MAGEA1, SIRT1, FOXN3, U2AF2, PPIL1, DAXX and ATP1B4. Interacts with VDR and RXRA; preferentially associates with VDR:RXRA heterodimers. Interacts with NCOR2. Interacts with MAML1. Interacts with NOTCH1 NICD; the interaction involves multimerized NOTCH1 NICD. Forms a complex with NOTCH1 NICD and MAML1; the association is dissociated by RBPJ. Associates with positive transcription elongation factor b (P-TEFb). Component of the SNARP complex which consists at least of SNIP1, SNW1, THRAP3, BCLAF1 and PNN.

The protein resides in the nucleus. Involved in pre-mRNA splicing as component of the spliceosome. As a component of the minor spliceosome, involved in the splicing of U12-type introns in pre-mRNAs. Required in the specific splicing of CDKN1A pre-mRNA; the function probably involves the recruitment of U2AF2 to the mRNA. May recruit PPIL1 to the spliceosome. May be involved in cyclin-D1/CCND1 mRNA stability through the SNARP complex which associates with both the 3'end of the CCND1 gene and its mRNA. Involved in transcriptional regulation. Modulates TGF-beta-mediated transcription via association with SMAD proteins, MYOD1-mediated transcription via association with PABPN1, RB1-mediated transcriptional repression, and retinoid-X receptor (RXR)- and vitamin D receptor (VDR)-dependent gene transcription in a cell line-specific manner probably involving coactivators NCOA1 and GRIP1. Is involved in NOTCH1-mediated transcriptional activation. Binds to multimerized forms of Notch intracellular domain (NICD) and is proposed to recruit transcriptional coactivators such as MAML1 to form an intermediate preactivation complex which associates with DNA-bound CBF-1/RBPJ to form a transcriptional activation complex by releasing SNW1 and redundant NOTCH1 NICD. This is SNW domain-containing protein 1 (SNW1) from Bos taurus (Bovine).